The primary structure comprises 1530 residues: Neurexin-1 (1530 aa).

The N-terminal stretch at 1–30 (MGTALVQHGGCCLLCLSLLLLGCWAELGSG) is a signal peptide. The Laminin G-like 1 domain occupies 31-217 (LEFPGAEGQW…PPNSGGGSPC (187 aa)). The Extracellular segment spans residues 31-1454 (LEFPGAEGQW…EVIRESSSTT (1424 aa)). N-linked (GlcNAc...) asparagine glycans are attached at residues Asn125 and Asn190. The tract at residues 196–219 (PVDGSEVKLDEEPPNSGGGSPCEA) is disordered. The EGF-like 1 domain occupies 213-255 (GGSPCEAGDEGDGGVCLNGGVCSVVDDQAVCDCSRTGFRGKDC). 2 cysteine pairs are disulfide-bonded: Cys228-Cys243 and Cys245-Cys255. Laminin G-like domains lie at 299-496 (IATF…AFKC) and 503-695 (DPIT…KPSC). 3 residues coordinate Ca(2+): Asp345, Leu362, and Met430. Cystine bridges form between Cys460/Cys496, Cys666/Cys695, Cys703/Cys714, Cys708/Cys723, and Cys725/Cys735. One can recognise an EGF-like 2 domain in the interval 699–736 (TAKPCLSNPCKNNGMCRDGWNRYVCDCSGTGYLGRSCE). Laminin G-like domains follow at residues 741-914 (VLSY…IDYC) and 928-1103 (DPVT…ERGC). Positions 788 and 805 each coordinate Ca(2+). The N-linked (GlcNAc...) asparagine glycan is linked to Asn813. Arg864 contacts Ca(2+). Disulfide bonds link Cys906–Cys914, Cys1075–Cys1103, Cys1110–Cys1121, Cys1115–Cys1130, and Cys1132–Cys1142. An EGF-like 3 domain is found at 1106-1143 (PSTTCQEDSCSNQGVCLQQWDGFSCDCSMTSFSGPLCN). The Laminin G-like 6 domain maps to 1149–1347 (YIFSKGGGQI…DANIAIVGNV (199 aa)). 2 residues coordinate Ca(2+): Asp1199 and Val1216. Asn1246 carries N-linked (GlcNAc...) asparagine glycosylation. Residues Ile1298 and Asn1300 each coordinate Ca(2+). Ser1408 carries an O-linked (Xyl...) (heparan sulfate) serine glycan. A disordered region spans residues 1412-1443 (PSDDEDIDPCEPSSGGLANPTRVGGREPYPGS). A helical transmembrane segment spans residues 1455-1475 (GMVVGIVAAAALCILILLYAM). Residues 1476–1530 (YKYRNRDEGSYHVDESRNYISNSAQSNGAVVKEKQPSSAKSANKNKKNKDKEYYV) are Cytoplasmic-facing. The segment at 1497–1523 (NSAQSNGAVVKEKQPSSAKSANKNKKN) is interaction with CASK. Positions 1497-1530 (NSAQSNGAVVKEKQPSSAKSANKNKKNKDKEYYV) are disordered.

The protein belongs to the neurexin family. In terms of assembly, interacts (via laminin G-like domain 2 and/or laminin G-like domain 6) with NLGN1 forming a heterotetramer, where one NLGN1 dimer interacts with one NRXN1 dimer. Also interacts (via laminin G-like domain 2 and/or laminin G-like domain 6) with NLGN2, NLGN3 and NLGN4L; interactions with NLGN1, NLGN2, NLGN3 and NLGN4L are calcium-dependent. Interacts (via cytoplasmic C-terminal region) with CASK (via the PDZ, SH3 and guanylate kinase-like domains). Interacts (via cytoplasmic C-terminus) with CASKIN1 and APBA1. Interacts (via laminin G-like domain 2) with NXPH1 and NXPH3. Alpha-type isoforms (neurexin-1-alpha) interact (via laminin G-like domain 2 and/or laminin G-like domain 6) with DAG1 (via alpha-dystroglycan chain). Interacts with LRRTM1, LRRTM2, LRRTM3 and LRRTM4. Interacts with SYT13 and SYTL1. Interacts with CBLN1, CBLN2 and, less avidly, with CBLN4. Interacts with CLSTN3. Alpha-type isoforms interact with alpha-latrotoxin from spider venom. O-glycosylated; contains heparan sulfate. Heparan sulfate attachment is required for synapse development by mediating interactions with neuroligins and LRRTM2. In terms of tissue distribution, brain (neuronal synapse).

It is found in the presynaptic cell membrane. Cell surface protein involved in cell-cell-interactions, exocytosis of secretory granules and regulation of signal transmission. Function is isoform-specific. Alpha-type isoforms have a long N-terminus with six laminin G-like domains and play an important role in synaptic signal transmission. Alpha-type isoforms play a role in the regulation of calcium channel activity and Ca(2+)-triggered neurotransmitter release at synapses and at neuromuscular junctions. They play an important role in Ca(2+)-triggered exocytosis of secretory granules in pituitary gland. They may affect their functions at synapses and in endocrine cells via their interactions with proteins from the exocytotic machinery. Likewise, alpha-type isoforms play a role in regulating the activity of postsynaptic NMDA receptors, a subtype of glutamate-gated ion channels. Both alpha-type and beta-type isoforms may play a role in the formation or maintenance of synaptic junctions via their interactions (via the extracellular domains) with neuroligin family members, CBLN1 or CBLN2. In vitro, triggers the de novo formation of presynaptic structures. May be involved in specification of excitatory synapses. Alpha-type isoforms were first identified as receptors for alpha-latrotoxin from spider venom. The chain is Neurexin-1 (Nrxn1) from Rattus norvegicus (Rat).